A 290-amino-acid chain; its full sequence is Putative transport permease ycf38 (290 aa).

Helical transmembrane passes span 21 to 41 (VTSF…FIQL), 46 to 66 (ITLI…GALF), 86 to 106 (PGIL…PLIF), 133 to 153 (FFIS…GVFL), 167 to 187 (FFFL…LALL), 194 to 213 (LIAV…TALA), and 261 to 281 (INIG…FLLF). An ABC transmembrane type-2 domain is found at 46-284 (ITLISGILQP…LVGFLLFKKI (239 aa)).

This sequence belongs to the ABC-2 integral membrane protein family.

The protein resides in the plastid. It localises to the cyanelle membrane. In Cyanophora paradoxa, this protein is Putative transport permease ycf38 (ycf38).